The following is a 156-amino-acid chain: Transcription elongation factor GreA (156 aa).

The protein belongs to the GreA/GreB family.

Functionally, necessary for efficient RNA polymerase transcription elongation past template-encoded arresting sites. The arresting sites in DNA have the property of trapping a certain fraction of elongating RNA polymerases that pass through, resulting in locked ternary complexes. Cleavage of the nascent transcript by cleavage factors such as GreA or GreB allows the resumption of elongation from the new 3'terminus. GreA releases sequences of 2 to 3 nucleotides. The polypeptide is Transcription elongation factor GreA (Thermomicrobium roseum (strain ATCC 27502 / DSM 5159 / P-2)).